A 542-amino-acid polypeptide reads, in one-letter code: Glucans biosynthesis protein G (542 aa).

The signal sequence occupies residues methionine 1–alanine 34.

Belongs to the OpgD/OpgG family.

Its subcellular location is the periplasm. The protein operates within glycan metabolism; osmoregulated periplasmic glucan (OPG) biosynthesis. Involved in the biosynthesis of osmoregulated periplasmic glucans (OPGs). This chain is Glucans biosynthesis protein G, found in Shewanella baltica (strain OS223).